Reading from the N-terminus, the 206-residue chain is Outer-membrane lipoprotein carrier protein (206 aa).

The signal sequence occupies residues 1–20; the sequence is MFYLIKKLPKFILFSLYLYA.

The protein belongs to the LolA family. As to quaternary structure, monomer.

It is found in the periplasm. Participates in the translocation of lipoproteins from the inner membrane to the outer membrane. Only forms a complex with a lipoprotein if the residue after the N-terminal Cys is not an aspartate (The Asp acts as a targeting signal to indicate that the lipoprotein should stay in the inner membrane). The protein is Outer-membrane lipoprotein carrier protein of Wigglesworthia glossinidia brevipalpis.